Here is an 86-residue protein sequence, read N- to C-terminus: Small ribosomal subunit protein bS20 (86 aa).

It belongs to the bacterial ribosomal protein bS20 family.

Its function is as follows. Binds directly to 16S ribosomal RNA. The chain is Small ribosomal subunit protein bS20 from Rhodococcus jostii (strain RHA1).